Reading from the N-terminus, the 47-residue chain is Small, acid-soluble spore protein N (47 aa).

A compositionally biased stretch (basic residues) spans 1 to 12 (MSNPKGSRKHFV). The interval 1–47 (MSNPKGSRKHFVPNHIGTQPRAAGGNKGKQMQDQSGQHAQVIQTKGE) is disordered. Residues 29–47 (KQMQDQSGQHAQVIQTKGE) show a composition bias toward polar residues.

The protein belongs to the SspN family.

The protein resides in the spore core. The chain is Small, acid-soluble spore protein N from Geobacillus kaustophilus (strain HTA426).